Here is a 224-residue protein sequence, read N- to C-terminus: Biosynthetic peptidoglycan transglycosylase (224 aa).

The chain crosses the membrane as a helical span at residues 12-32 (ILVVLAILPVFLLLVYSLPFV).

The protein belongs to the glycosyltransferase 51 family.

Its subcellular location is the cell inner membrane. The catalysed reaction is [GlcNAc-(1-&gt;4)-Mur2Ac(oyl-L-Ala-gamma-D-Glu-L-Lys-D-Ala-D-Ala)](n)-di-trans,octa-cis-undecaprenyl diphosphate + beta-D-GlcNAc-(1-&gt;4)-Mur2Ac(oyl-L-Ala-gamma-D-Glu-L-Lys-D-Ala-D-Ala)-di-trans,octa-cis-undecaprenyl diphosphate = [GlcNAc-(1-&gt;4)-Mur2Ac(oyl-L-Ala-gamma-D-Glu-L-Lys-D-Ala-D-Ala)](n+1)-di-trans,octa-cis-undecaprenyl diphosphate + di-trans,octa-cis-undecaprenyl diphosphate + H(+). It participates in cell wall biogenesis; peptidoglycan biosynthesis. In terms of biological role, peptidoglycan polymerase that catalyzes glycan chain elongation from lipid-linked precursors. This chain is Biosynthetic peptidoglycan transglycosylase, found in Brucella melitensis biotype 1 (strain ATCC 23456 / CCUG 17765 / NCTC 10094 / 16M).